Consider the following 365-residue polypeptide: 3-dehydroquinate synthase (365 aa).

NAD(+) is bound by residues 75 to 80, 109 to 113, 133 to 134, K146, and K155; these read DAENGK, GAATD, and TT. Zn(2+)-binding residues include E188, H253, and H269.

The protein belongs to the sugar phosphate cyclases superfamily. Dehydroquinate synthase family. It depends on Co(2+) as a cofactor. Zn(2+) is required as a cofactor. Requires NAD(+) as cofactor.

It localises to the cytoplasm. The enzyme catalyses 7-phospho-2-dehydro-3-deoxy-D-arabino-heptonate = 3-dehydroquinate + phosphate. It participates in metabolic intermediate biosynthesis; chorismate biosynthesis; chorismate from D-erythrose 4-phosphate and phosphoenolpyruvate: step 2/7. Functionally, catalyzes the conversion of 3-deoxy-D-arabino-heptulosonate 7-phosphate (DAHP) to dehydroquinate (DHQ). The polypeptide is 3-dehydroquinate synthase (Corynebacterium glutamicum (strain R)).